The primary structure comprises 247 residues: Osmotin-like protein NP24-I (247 aa).

An N-terminal signal peptide occupies residues 1 to 21 (MGYLTSSFVLFFLLCVTYTYA). Disulfide bonds link C30-C225, C72-C82, C87-C93, C141-C213, C146-C196, C154-C164, C168-C177, and C178-C183.

The protein belongs to the thaumatin family. In terms of tissue distribution, highest levels of both isoforms found in the outer pericarp, with smaller amounts in the inner pericarp.

Its subcellular location is the cytoplasm. It localises to the vacuole. It catalyses the reaction Endohydrolysis of (1-&gt;3)- or (1-&gt;4)-linkages in beta-D-glucans when the glucose residue whose reducing group is involved in the linkage to be hydrolyzed is itself substituted at C-3.. In terms of biological role, has antifungal activity against P.betae and F.dahliae. May be involved in disease resistance in tomatoes and/or have a possible role in fruit development and ripening. Binds to beta-glucans and exhibits beta-1,3-D-glucanase activity. The sequence is that of Osmotin-like protein NP24-I from Solanum lycopersicum (Tomato).